A 483-amino-acid chain; its full sequence is Peroxisomal biogenesis factor 3 (483 aa).

The Peroxisomal segment spans residues 1-14; that stretch reads MTGNRSLVQRHRKK. Residues 15–35 form a helical membrane-spanning segment; the sequence is FVVSSVLFATLFATCAITVYF. Residues 36–483 are Cytoplasmic-facing; sequence SKRWLYKQHL…SACVYSNFGL (448 aa). Disordered stretches follow at residues 119-149 and 230-253; these read GLSSGMSAMTPAPSVSAKSPQSADTTSVSET and NNLPSEKADPRNSDGTIDTDTRSI. The span at 242–253 shows a compositional bias: polar residues; sequence SDGTIDTDTRSI.

This sequence belongs to the peroxin-3 family.

The protein resides in the peroxisome membrane. Involved in peroxisome biosynthesis. This chain is Peroxisomal biogenesis factor 3 (PEX3), found in Kluyveromyces lactis (strain ATCC 8585 / CBS 2359 / DSM 70799 / NBRC 1267 / NRRL Y-1140 / WM37) (Yeast).